Consider the following 31-residue polypeptide: Potassium channel toxin alpha-KTx 5.1 (31 aa).

Intrachain disulfides connect C3–C21, C8–C26, and C12–C28. Positions 6 to 9 are [R/K]XCQ motif; that stretch reads RMCQ. H31 is subject to Histidine amide.

Belongs to the short scorpion toxin superfamily. Potassium channel inhibitor family. Alpha-KTx 05 subfamily. Two disulfide bonds are the minimal requirement needed to produce a nativelike and bio-active conformation in this toxin. The third disulfide provides an additional contribution to structure stabilization and can modulate biological potency depending on its position and the structural regions involved in biological activity. Expressed by the venom gland.

The protein resides in the secreted. Blocker for the small conductance calcium-activated potassium channels. Shows the best affinity for KCa2.2/KCNN2 (Kd=0.2 nM), followed by KCa2.3/KCNN3 (Kd=1.1 nM) and KCa2.1/KCNN1 (Kd=325 nM). In Leiurus hebraeus (Hebrew deathstalker scorpion), this protein is Potassium channel toxin alpha-KTx 5.1.